The following is a 285-amino-acid chain: 2-oxoglutarate synthase subunit KorB (285 aa).

Heterotetramer of the KorA, KorB, KorC and KorD subunits.

It catalyses the reaction 2 oxidized [2Fe-2S]-[ferredoxin] + 2-oxoglutarate + CoA = succinyl-CoA + 2 reduced [2Fe-2S]-[ferredoxin] + CO2 + H(+). The chain is 2-oxoglutarate synthase subunit KorB (korB) from Methanothermobacter marburgensis (strain ATCC BAA-927 / DSM 2133 / JCM 14651 / NBRC 100331 / OCM 82 / Marburg) (Methanobacterium thermoautotrophicum).